The primary structure comprises 213 residues: High frequency lysogenization protein HflD homolog (213 aa).

Residues 79 to 126 are a coiled coil; it reads QGLNAELTRYTLSLMVLERKLSSAKGALDTLGNRINGLQRQLEHFDLQ.

Belongs to the HflD family.

The protein resides in the cytoplasm. The protein localises to the cell inner membrane. This is High frequency lysogenization protein HflD homolog from Shigella dysenteriae serotype 1 (strain Sd197).